A 147-amino-acid chain; its full sequence is UPF0208 membrane protein SO_2914 (147 aa).

2 consecutive transmembrane segments (helical) span residues 40–60 and 68–88; these read LAILVMPVLAVLASVSQLYTY and ALTIALFFISLPLQGLLWLGW.

This sequence belongs to the UPF0208 family.

It localises to the cell inner membrane. The protein is UPF0208 membrane protein SO_2914 of Shewanella oneidensis (strain ATCC 700550 / JCM 31522 / CIP 106686 / LMG 19005 / NCIMB 14063 / MR-1).